The following is a 175-amino-acid chain: Regenerating islet-derived protein 3-beta (175 aa).

Residues 1 to 26 (MLPPTACSVMSWMLLSCLMLLSQVQG) form the signal peptide. Residues 27-37 (EDSLKNIPSAR) constitute a propeptide that is removed on maturation. 3 disulfides stabilise this stretch: Cys-40–Cys-51, Cys-68–Cys-171, and Cys-146–Cys-163. In terms of domain architecture, C-type lectin spans 47–172 (YGSYCYALFQ…CEVKLPYVCK (126 aa)). His-107 lines the Zn(2+) pocket. The EPN signature appears at 114-116 (EPN). Glu-121 serves as a coordination point for Zn(2+).

Forms a hexameric membrane-permeabilizing oligomeric pore on membrane phospholipids. The hexamer is formed by three dimers related by helical symmetry. Forms filaments, filamentation traps pore complexes and limits damage to host cells. Interacts with EXTL3. In terms of processing, proteolytic processing by trypsin removes an inhibitory N-terminal propeptide and is essential for peptidoglycan binding and antibacterial activity. Constitutively expressed in the small intestine, moderately in colon and at an extremely low level in healthy pancreas.

It localises to the secreted. Lipopolysaccharide inhibits pore-forming activity, explaining why is bactericidal for Gram-positive but not Gram-negative bacteria. Its function is as follows. Bactericidal C-type lectin which acts against several intestinal Gram-positive and Gram-negative bacteria. Lacks antibacterial activity against S.typhimurium. May play a role in protection against infection with S.enteritidis by inhibiting its translocation from the gut lumen into intestinal tissues and further extraintestinal tissues. Acts as a hormone in response to different stimuli. Secreted by different cell types to activate its receptor EXTL3 and induce cell specific signaling pathways. In pancreas, is able stimulate cell proliferation. The polypeptide is Regenerating islet-derived protein 3-beta (Mus musculus (Mouse)).